A 510-amino-acid polypeptide reads, in one-letter code: Zinc finger protein 692 (510 aa).

Disordered stretches follow at residues 1–20 (MAASPADASRRRREKRRQLD) and 121–306 (WGPS…EDTA). Ser161 carries the phosphoserine modification. The segment covering 163 to 172 (CDERAQEARM) has biased composition (basic and acidic residues). Residues 188–201 (EDGEEEEEDEEEML) are compositionally biased toward acidic residues. The residue at position 225 (Ser225) is a Phosphoserine. The span at 237–265 (APAPAAVPAPLASPSSSASSLGSGAPGPV) shows a compositional bias: low complexity. Polar residues predominate over residues 278–297 (QADQQTEPLASPGSQAQSAL). 5 C2H2-type zinc fingers span residues 322-347 (LPCDFPGCGRIFSNRQYLNHHKKYQH), 353-377 (FSCPEPACGKSFNFKKHLKEHVKLH), 383-405 (YICEFCARSFRTSSNLVIHRRIH), 411-433 (LQCEICGFTCRQKASLNWHRRKH), and 442-465 (FPCEFCGKRFEKPDSVAAHRSKSH). Phosphoserine is present on Ser464.

Belongs to the krueppel C2H2-type zinc-finger protein family. Phosphorylation at Ser-464 results in loss of DNA-binding activity.

It is found in the nucleus. In terms of biological role, may act as an transcriptional repressor for PCK1 gene expression, in turn may participate in the hepatic gluconeogenesis regulation through the activated AMPK signaling pathway. The chain is Zinc finger protein 692 from Bos taurus (Bovine).